The following is a 146-amino-acid chain: Large ribosomal subunit protein uL15 (146 aa).

Composition is skewed to basic residues over residues 1–13 and 22–38; these read MIRK…RMRG and SKKR…GQAG. The interval 1 to 38 is disordered; it reads MIRKRRKITRMRGSRTVGGGCSKKRRGAGHRGGRGQAG.

It belongs to the universal ribosomal protein uL15 family. In terms of assembly, part of the 50S ribosomal subunit.

Functionally, binds to the 23S rRNA. In Methanothermobacter thermautotrophicus (strain ATCC 29096 / DSM 1053 / JCM 10044 / NBRC 100330 / Delta H) (Methanobacterium thermoautotrophicum), this protein is Large ribosomal subunit protein uL15.